A 679-amino-acid polypeptide reads, in one-letter code: Membrane-spanning 4-domains subfamily A member 14 (679 aa).

A run of 4 helical transmembrane segments spans residues 50–70 (ILLALIIVGFGTIFALNYIGF), 76–96 (LVVLTGYPFWGALIFILTGYL), 110–130 (VTGMNVISSLVAITGITFTIL), and 141–161 (MPSFEEICVFSRTLFIVLFFL). 4 disordered regions span residues 218-259 (VSQP…EKKP), 331-363 (SEQTMPSKSTSSHVKQSSNLTANDLPPQGILSQ), 469-491 (KEWKSEEELHRRKSSRRHSLNQQ), and 505-633 (VQAK…QAQV). A compositionally biased stretch (basic and acidic residues) spans 224–234 (KGREFVPDEQK). Positions 337–348 (SKSTSSHVKQSS) are enriched in low complexity. Residues 469–478 (KEWKSEEELH) show a composition bias toward basic and acidic residues. Polar residues-rich tracts occupy residues 519-535 (DQQSKGWQSPKQKSLDQ) and 550-563 (KQAQLNQTKEQLPD). The segment covering 580-601 (QSKDGQVKDQQTDKEQNSKKQT) has biased composition (basic and acidic residues). Residues 619 to 632 (GQFQNVQAEGQQAQ) show a composition bias toward polar residues.

The protein belongs to the MS4A family.

The protein resides in the membrane. In terms of biological role, may be involved in signal transduction as a component of a multimeric receptor complex. The chain is Membrane-spanning 4-domains subfamily A member 14 (MS4A14) from Homo sapiens (Human).